A 53-amino-acid chain; its full sequence is Large ribosomal subunit protein bL32c (53 aa).

Belongs to the bacterial ribosomal protein bL32 family.

The protein resides in the plastid. It is found in the chloroplast. In Coffea arabica (Arabian coffee), this protein is Large ribosomal subunit protein bL32c.